The following is a 159-amino-acid chain: Pathogenesis-related leaf protein 4 (159 aa).

An N-terminal signal peptide occupies residues 1–24; the sequence is MGLFNISLLLTCLMVLAIFHSCEA. Glutamine 25 bears the Pyrrolidone carboxylic acid mark. An SCP domain is found at 32–147; sequence LAVHNDARAQ…NGWWFISCNY (116 aa). Disulfide bonds link cysteine 68–cysteine 136, cysteine 109–cysteine 115, and cysteine 131–cysteine 145.

It belongs to the CRISP family.

Functionally, probably involved in the defense reaction of plants against pathogens. This is Pathogenesis-related leaf protein 4 from Solanum lycopersicum (Tomato).